A 340-amino-acid polypeptide reads, in one-letter code: UDP-3-O-(3-hydroxymyristoyl)glucosamine N-acyltransferase (340 aa).

The active-site Proton acceptor is H239.

The protein belongs to the transferase hexapeptide repeat family. LpxD subfamily. Homotrimer.

The enzyme catalyses a UDP-3-O-[(3R)-3-hydroxyacyl]-alpha-D-glucosamine + a (3R)-hydroxyacyl-[ACP] = a UDP-2-N,3-O-bis[(3R)-3-hydroxyacyl]-alpha-D-glucosamine + holo-[ACP] + H(+). The catalysed reaction is UDP-3-O-[(3R)-3-hydroxytetradecanoyl]-alpha-D-glucosamine + (3R)-hydroxytetradecanoyl-[ACP] = UDP-2-N,3-O-bis[(3R)-3-hydroxytetradecanoyl]-alpha-D-glucosamine + holo-[ACP] + H(+). It participates in glycolipid biosynthesis; lipid IV(A) biosynthesis; lipid IV(A) from (3R)-3-hydroxytetradecanoyl-[acyl-carrier-protein] and UDP-N-acetyl-alpha-D-glucosamine: step 3/6. Functionally, catalyzes the N-acylation of UDP-3-O-(hydroxytetradecanoyl)glucosamine using 3-hydroxytetradecanoyl-ACP as the acyl donor. Is involved in the biosynthesis of lipid A, a phosphorylated glycolipid that anchors the lipopolysaccharide to the outer membrane of the cell. This chain is UDP-3-O-(3-hydroxymyristoyl)glucosamine N-acyltransferase, found in Sodalis glossinidius (strain morsitans).